The following is a 261-amino-acid chain: Cytochrome c oxidase subunit 3 (261 aa).

The Mitochondrial matrix segment spans residues 1–15 (MAHQAHAYHMVDPSP). A helical membrane pass occupies residues 16–34 (WPLTGAIAALLMTSGLAIW). Over 35 to 40 (FHFHST) the chain is Mitochondrial intermembrane. The chain crosses the membrane as a helical span at residues 41 to 66 (TLMTLGLILLLLTMYQWWRDIIREGT). The Mitochondrial matrix segment spans residues 67-72 (FQGHHT). The helical transmembrane segment at 73-105 (PPVQKGLRYGMILFITSEVFFFLGFFWAFYHSS) threads the bilayer. Residues 106 to 128 (LAPTPELGGCWPPTGITPLDPFE) lie on the Mitochondrial intermembrane side of the membrane. A helical transmembrane segment spans residues 129–152 (VPLLNTAVLLASGVTVTWAHHSIM). Over 153–155 (EGE) the chain is Mitochondrial matrix. Residues 156–183 (RKQAIQSLALTILLGLYFTALQAMEYYE) form a helical membrane-spanning segment. Residues 184–190 (APFTIAD) are Mitochondrial intermembrane-facing. Residues 191 to 223 (GVYGSTFFVATGFHGLHVIIGSTFLAVCLLRQI) traverse the membrane as a helical segment. Over 224 to 232 (QYHFTSEHH) the chain is Mitochondrial matrix. A helical transmembrane segment spans residues 233–256 (FGFEAAAWYWHFVDVVWLFLYVSI). Topologically, residues 257–261 (YWWGS) are mitochondrial intermembrane.

The protein belongs to the cytochrome c oxidase subunit 3 family. In terms of assembly, component of the cytochrome c oxidase (complex IV, CIV), a multisubunit enzyme composed of 14 subunits. The complex is composed of a catalytic core of 3 subunits MT-CO1, MT-CO2 and MT-CO3, encoded in the mitochondrial DNA, and 11 supernumerary subunits COX4I, COX5A, COX5B, COX6A, COX6B, COX6C, COX7A, COX7B, COX7C, COX8 and NDUFA4, which are encoded in the nuclear genome. The complex exists as a monomer or a dimer and forms supercomplexes (SCs) in the inner mitochondrial membrane with NADH-ubiquinone oxidoreductase (complex I, CI) and ubiquinol-cytochrome c oxidoreductase (cytochrome b-c1 complex, complex III, CIII), resulting in different assemblies (supercomplex SCI(1)III(2)IV(1) and megacomplex MCI(2)III(2)IV(2)).

The protein resides in the mitochondrion inner membrane. It carries out the reaction 4 Fe(II)-[cytochrome c] + O2 + 8 H(+)(in) = 4 Fe(III)-[cytochrome c] + 2 H2O + 4 H(+)(out). Functionally, component of the cytochrome c oxidase, the last enzyme in the mitochondrial electron transport chain which drives oxidative phosphorylation. The respiratory chain contains 3 multisubunit complexes succinate dehydrogenase (complex II, CII), ubiquinol-cytochrome c oxidoreductase (cytochrome b-c1 complex, complex III, CIII) and cytochrome c oxidase (complex IV, CIV), that cooperate to transfer electrons derived from NADH and succinate to molecular oxygen, creating an electrochemical gradient over the inner membrane that drives transmembrane transport and the ATP synthase. Cytochrome c oxidase is the component of the respiratory chain that catalyzes the reduction of oxygen to water. Electrons originating from reduced cytochrome c in the intermembrane space (IMS) are transferred via the dinuclear copper A center (CU(A)) of subunit 2 and heme A of subunit 1 to the active site in subunit 1, a binuclear center (BNC) formed by heme A3 and copper B (CU(B)). The BNC reduces molecular oxygen to 2 water molecules using 4 electrons from cytochrome c in the IMS and 4 protons from the mitochondrial matrix. The chain is Cytochrome c oxidase subunit 3 (mt-co3) from Cyprinus carpio (Common carp).